We begin with the raw amino-acid sequence, 924 residues long: Probable dipeptidyl-aminopeptidase B (924 aa).

Positions 1-104 (MPPFTYSDDT…DQRSPGDGQR (104 aa)) are disordered. Residues 1 to 111 (MPPFTYSDDT…GQRMDRSLRR (111 aa)) are Cytoplasmic-facing. The span at 9–23 (DTLRSGRDRFRDHSP) shows a compositional bias: basic and acidic residues. Positions 31 to 43 (SQETDSSASTTSI) are enriched in polar residues. Composition is skewed to basic and acidic residues over residues 47-58 (RIQERLDTKEFT) and 92-104 (SRSD…DGQR). A helical; Signal-anchor for type II membrane protein transmembrane segment spans residues 112–132 (WLFIVSGVLVATWVIGLFVFV). Residues 133–924 (SSKAYKPSSS…GMKKRAAPTA (792 aa)) are Vacuolar-facing. N-linked (GlcNAc...) asparagine glycans are attached at residues Asn231 and Asn364. Ser768 acts as the Charge relay system in catalysis. The N-linked (GlcNAc...) asparagine glycan is linked to Asn827. Catalysis depends on charge relay system residues Asp845 and His878.

Belongs to the peptidase S9B family.

Its subcellular location is the vacuole membrane. It carries out the reaction Release of an N-terminal dipeptide, Xaa-Yaa-|-Zaa-, from a polypeptide, preferentially when Yaa is Pro, provided Zaa is neither Pro nor hydroxyproline.. Type IV dipeptidyl-peptidase which removes N-terminal dipeptides sequentially from polypeptides having unsubstituted N-termini provided that the penultimate residue is proline. The polypeptide is Probable dipeptidyl-aminopeptidase B (DAPB) (Sordaria macrospora (strain ATCC MYA-333 / DSM 997 / K(L3346) / K-hell)).